The following is a 240-amino-acid chain: Probable septum site-determining protein MinC (240 aa).

It belongs to the MinC family. Interacts with MinD and FtsZ.

Its function is as follows. Cell division inhibitor that blocks the formation of polar Z ring septums. Rapidly oscillates between the poles of the cell to destabilize FtsZ filaments that have formed before they mature into polar Z rings. Prevents FtsZ polymerization. The polypeptide is Probable septum site-determining protein MinC (Acinetobacter baumannii (strain ATCC 17978 / DSM 105126 / CIP 53.77 / LMG 1025 / NCDC KC755 / 5377)).